Here is a 516-residue protein sequence, read N- to C-terminus: MDSPEKRIYIFDTTLRDGEQSPGSSMNPAEKLRIARQLEKMGVDIIEAGFPIASEGDFLSVQQIAQEIRGAQIAGLARANNADIDRAWEAIRDAANPRIHTFISSSDIHLKYQLRKSREQVLKEAVAAVERARSYTPNVEFSPMDATRTDRGYLCEMVEAVIAAGASTVNIPDTVGYAIPQEFGELIAYLRANVPNISQAIISVHCHNDLGLAVANSLSAILNGARQVECTINGIGERAGNTAMEEVVMALRTRKDLFGFYTGIKTESIYQSSRLLTQITGVAVQPNKAIVGANAFAHESGIHQDGLIKEKITYEIMTPQSVGISDSHIVLGKHSGRHAVSEHLKKLGFNLSDTELNKIFVRFKELADAKKNVFDEDLEAIVYEELYRVEDKYKLIYLNVVSGNVAIPTATMQMEVDREIVQDAGFGVGPVDATFDAIRKITGTNYDLLRYVVNAISGGTDAQGEVTVQLKFNGRSVVGHGADLDVIVASARAYINALNRLEFLKRDAGKIKSEYE.

The 263-residue stretch at 8 to 270 (IYIFDTTLRD…YTGIKTESIY (263 aa)) folds into the Pyruvate carboxyltransferase domain. Mn(2+) contacts are provided by Asp17, His205, His207, and Asn241. The regulatory domain stretch occupies residues 394–516 (KLIYLNVVSG…DAGKIKSEYE (123 aa)).

This sequence belongs to the alpha-IPM synthase/homocitrate synthase family. LeuA type 1 subfamily. In terms of assembly, homodimer. Requires Mn(2+) as cofactor.

It is found in the cytoplasm. The catalysed reaction is 3-methyl-2-oxobutanoate + acetyl-CoA + H2O = (2S)-2-isopropylmalate + CoA + H(+). It participates in amino-acid biosynthesis; L-leucine biosynthesis; L-leucine from 3-methyl-2-oxobutanoate: step 1/4. Catalyzes the condensation of the acetyl group of acetyl-CoA with 3-methyl-2-oxobutanoate (2-ketoisovalerate) to form 3-carboxy-3-hydroxy-4-methylpentanoate (2-isopropylmalate). This Syntrophus aciditrophicus (strain SB) protein is 2-isopropylmalate synthase.